We begin with the raw amino-acid sequence, 397 residues long: Putative serine/threonine-protein kinase R301 (397 aa).

Residues 25 to 397 (QIKSTSVGSG…IIRHFNSPRL (373 aa)) form the Protein kinase domain. ATP-binding positions include 31-39 (VGSGGSDNI) and Lys-53. The Proton acceptor role is filled by Asp-218.

This sequence belongs to the protein kinase superfamily. Ser/Thr protein kinase family.

The protein localises to the virion. It carries out the reaction L-seryl-[protein] + ATP = O-phospho-L-seryl-[protein] + ADP + H(+). It catalyses the reaction L-threonyl-[protein] + ATP = O-phospho-L-threonyl-[protein] + ADP + H(+). This Acanthamoeba polyphaga (Amoeba) protein is Putative serine/threonine-protein kinase R301.